The chain runs to 59 residues: Potassium channel toxin alpha-KTx 1.2 (59 aa).

The signal sequence occupies residues 1–22 (MKILSVLLLALIICSIIDWSEG). Gln23 is modified (pyrrolidone carboxylic acid). Cystine bridges form between Cys29–Cys50, Cys35–Cys55, and Cys39–Cys57. Residues 48-55 (GKCMNKKC) form an interaction with Ca(2+)-activated K(+) channels region.

Belongs to the short scorpion toxin superfamily. Potassium channel inhibitor family. Alpha-KTx 01 subfamily. As to expression, expressed by the venom gland.

It is found in the secreted. Functionally, blocks calcium-activated potassium channels (Kd=43 nM on KCa1.1/KCNMA1). Has a potent presynaptic facilitatory action, with less effect on direct muscle stimulation. The polypeptide is Potassium channel toxin alpha-KTx 1.2 (Leiurus hebraeus (Hebrew deathstalker scorpion)).